The chain runs to 245 residues: Dehydrogenase/reductase SDR family member 6 (245 aa).

Residues 16–18 (QGI), D37, and D58 each bind NAD(+). Residue R144 coordinates substrate. The active-site Proton acceptor is Y147. NAD(+) is bound by residues K151 and 180–184 (VDTPS). Residues R188 and R205 each coordinate substrate.

Belongs to the short-chain dehydrogenases/reductases (SDR) family. As to quaternary structure, homotetramer.

It localises to the cytoplasm. It carries out the reaction cis-4-hydroxy-L-proline + NAD(+) = 4-oxo-L-proline + NADH + H(+). The enzyme catalyses (R)-3-hydroxybutanoate + NAD(+) = acetoacetate + NADH + H(+). Its pathway is amino-acid metabolism. It functions in the pathway siderophore biosynthesis. Functionally, NAD(H)-dependent dehydrogenase/reductase with a preference for cyclic substrates. Catalyzes stereoselective conversion of 4-oxo-L-proline to cis-4-hydroxy-L-proline, likely a detoxification mechanism for ketoprolines. Mediates the formation of 2,5-dihydroxybenzoate (2,5-DHBA), a siderophore that chelates free cytoplasmic iron, thereby regulating iron transport and homeostasis while protecting cells against free radical-induced oxidative stress. The iron-siderophore complex is imported into mitochondria, providing an iron source for mitochondrial metabolic processes in particular heme synthesis. May act as a 3-hydroxybutyrate dehydrogenase. The chain is Dehydrogenase/reductase SDR family member 6 (bdh2) from Danio rerio (Zebrafish).